Consider the following 214-residue polypeptide: Adenylate kinase (214 aa).

Residue 10-15 (GAGKGT) coordinates ATP. The tract at residues 30–59 (STGDMLRAAVKAGTELGKQAKEIMDAGKLV) is NMP. AMP-binding positions include threonine 31, arginine 36, 57–59 (KLV), 85–88 (GFPR), and glutamine 92. Positions 122–159 (GRRVHAASGRVYHVKFNPPKVEGKDDVTGEDLTIRKDD) are LID. Residues arginine 123 and 132–133 (VY) each bind ATP. Residues arginine 156 and arginine 167 each contribute to the AMP site. Arginine 200 contacts ATP.

This sequence belongs to the adenylate kinase family. Monomer.

The protein localises to the cytoplasm. The enzyme catalyses AMP + ATP = 2 ADP. Its pathway is purine metabolism; AMP biosynthesis via salvage pathway; AMP from ADP: step 1/1. Its function is as follows. Catalyzes the reversible transfer of the terminal phosphate group between ATP and AMP. Plays an important role in cellular energy homeostasis and in adenine nucleotide metabolism. The sequence is that of Adenylate kinase from Pectobacterium carotovorum subsp. carotovorum (strain PC1).